A 1036-amino-acid chain; its full sequence is Protein translocase subunit SecA, chloroplastic (1036 aa).

Residues 1–76 (MESCARSASQ…KIGELMQVRA (76 aa)) constitute a chloroplast transit peptide. 186–193 (MRTGEGKT) is a binding site for ATP. A disordered region spans residues 995 to 1036 (NQEQQQKGKPDSSNVENKRIGDANLNPVSVTESPSSDSPQNT). The span at 1000–1015 (QKGKPDSSNVENKRIG) shows a compositional bias: basic and acidic residues. The span at 1020 to 1036 (NPVSVTESPSSDSPQNT) shows a compositional bias: polar residues.

Belongs to the SecA family.

It is found in the plastid. The protein resides in the chloroplast stroma. The protein localises to the chloroplast thylakoid membrane. The catalysed reaction is ATP + H2O + chloroplast-proteinSide 1 = ADP + phosphate + chloroplast-proteinSide 2.. In terms of biological role, has a central role in coupling the hydrolysis of ATP to the transfer of proteins across the thylakoid membrane. In Spinacia oleracea (Spinach), this protein is Protein translocase subunit SecA, chloroplastic.